A 102-amino-acid polypeptide reads, in one-letter code: MYAIVKTGGKQYKVAVGDVVEVEKLEGEPGSEVTFPALLLVDGSDVTADADALAKVSVTGKLVEQTKGPKIRIHKFKNKTGYHKRQGHRQKLTRVEVTGITK.

The protein belongs to the bacterial ribosomal protein bL21 family. In terms of assembly, part of the 50S ribosomal subunit. Contacts protein L20.

This protein binds to 23S rRNA in the presence of protein L20. The polypeptide is Large ribosomal subunit protein bL21 (Saccharopolyspora erythraea (strain ATCC 11635 / DSM 40517 / JCM 4748 / NBRC 13426 / NCIMB 8594 / NRRL 2338)).